Consider the following 806-residue polypeptide: Transitional endoplasmic reticulum ATPase (806 aa).

Residue Ala-2 is modified to N-acetylalanine. Ser-3 and Ser-7 each carry phosphoserine. Lys-8 is covalently cross-linked (Glycyl lysine isopeptide (Lys-Gly) (interchain with G-Cter in SUMO2)). Ser-13 carries the post-translational modification Phosphoserine. Lys-18 is covalently cross-linked (Glycyl lysine isopeptide (Lys-Gly) (interchain with G-Cter in SUMO2)). Ser-37 bears the Phosphoserine mark. An ATP-binding site is contributed by 247–253 (PGTGKTL). Lys-315 is subject to N6,N6,N6-trimethyllysine; by VCPKMT. ATP-binding residues include Asn-348 and His-384. Residue Thr-436 is modified to Phosphothreonine. Ser-462 carries the phosphoserine modification. N6-acetyllysine occurs at positions 502 and 505. An ATP-binding site is contributed by 521-526 (GCGKTL). Lys-668 carries the N6-acetyllysine; alternate modification. Lys-668 carries the post-translational modification N6-succinyllysine; alternate. The residue at position 702 (Ser-702) is a Phosphoserine. The disordered stretch occupies residues 708-727 (RRERERQTNPSAMEVEEDDP). Position 754 is an N6-acetyllysine (Lys-754). The interval 768-806 (FGSFRFPSGNQGGAGPSQGSGGGTGGNVYTEDNDDDLYG) is disordered. Residues Ser-770, Ser-775, and Ser-787 each carry the phosphoserine modification. Over residues 777–793 (NQGGAGPSQGSGGGTGG) the composition is skewed to gly residues. The segment at 797–806 (TEDNDDDLYG) is interaction with UBXN6. Positions 802–806 (DDLYG) match the PIM motif motif. Phosphotyrosine is present on Tyr-805.

It belongs to the AAA ATPase family. In terms of assembly, homohexamer. Forms a ring-shaped particle of 12.5 nm diameter, that displays 6-fold radial symmetry. Part of a ternary complex containing STX5A, NSFL1C and VCP. NSFL1C forms a homotrimer that binds to one end of a VCP homohexamer. The complex binds to membranes enriched in phosphatidylethanolamine-containing lipids and promotes Golgi membrane fusion. Binds to a heterodimer of NPLOC4 and UFD1, binding to this heterodimer inhibits Golgi-membrane fusion. Interaction with VCIP135 leads to dissociation of the complex via ATP hydrolysis by VCP. Part of a ternary complex containing NPLOC4, UFD1 and VCP. Interacts with NSFL1C-like protein p37; the complex has membrane fusion activity and is required for Golgi and endoplasmic reticulum biogenesis. Interacts with SELENOS and SYVN1, as well as with DERL1 (via SHP-box motif), DERL2 and DERL3; which probably transfer misfolded proteins from the ER to VCP. Interacts with SVIP and DERL1. Component of a complex required to couple retrotranslocation, ubiquitination and deglycosylation composed of NGLY1, SAKS1, AMFR, VCP and RAD23B. Part of a complex composed of STUB1/CHIP, VCP/p97, CHRNA3, and UBXN2A that modulates the ubiquitination and endoplasmic reticulum-associated degradation (ERAD) of CHRNA3. Within the complex UBXN2A acts as a scaffold protein required for the interaction of CHRNA3 with VCP/p97, this interaction also inhibits CHRNA3 ubiquitination by STUB1/CHIP and subsequently ERAD. Interacts with UBXN2A (via UBX domain); the interaction is required for the interaction of CHRNA3 in the STUB1-VCP-UBXN2A complex. Directly interacts with UBXN4 and RNF19A. Interacts with CASR. Interacts with UBE4B and YOD1. Interacts with clathrin. Interacts with RNF103. Interacts with TRIM13 and TRIM21. Component of a VCP/p97-AMFR/gp78 complex that participates in the final step of the endoplasmic reticulum-associated degradation (ERAD) of HMGCR. Interacts directly with AMFR/gp78 (via its VIM). Interacts with RHBDD1 (via C-terminal domain). Interacts with SPRTN; leading to recruitment to stalled replication forks. Interacts with WASHC5. Interacts with UBOX5. Interacts (via N-terminus) with UBXN7, UBXN8, and probably several other UBX domain-containing proteins (via UBX domains); the interactions are mutually exclusive with VIM-dependent interactions such as those with AMFR and SELENOS. Forms a complex with UBQLN1 and UBXN4. Interacts (via the PIM motif) with RNF31 (via the PUB domain). Interacts with RIGI and RNF125; interaction takes place when RIGI is ubiquitinated via 'Lys-63'-linked ubiquitin on its CARD domains, leading to recruit RNF125 and promote ubiquitination and degradation of RIGI. Interacts with BAG6. Interacts with UBXN10. Interacts with UBXN6; the interaction with UBXN6 is direct and competitive with UFD1. Forms a ternary complex with CAV1 and UBXN6. Interacts with PLAA, UBXN6 and YOD1; may form a complex involved in macroautophagy. Interacts with ANKZF1. Interacts with ubiquitin-binding protein FAF1. Interacts with ZFAND2B (via VIM motif); the interaction is direct. Interacts with ZFAND1 (via its ubiquitin-like region); this interaction occurs in an arsenite-dependent manner. Interacts with CCDC47. Interacts with LMBR1L and UBAC2. Interacts with ATXN3. Interacts with TEX264; bridging VCP to covalent DNA-protein cross-links (DPCs). Post-translationally, ISGylated. Methylation at Lys-315 catalyzed by VCPKMT is increased in the presence of ASPSCR1. Lys-315 methylation may decrease ATPase activity. In terms of processing, phosphorylated by tyrosine kinases in response to T-cell antigen receptor activation. Phosphorylated in mitotic cells.

Its subcellular location is the cytoplasm. It is found in the cytosol. The protein localises to the endoplasmic reticulum. It localises to the nucleus. The protein resides in the stress granule. The enzyme catalyses ATP + H2O = ADP + phosphate + H(+). Its function is as follows. Necessary for the fragmentation of Golgi stacks during mitosis and for their reassembly after mitosis. Involved in the formation of the transitional endoplasmic reticulum (tER). The transfer of membranes from the endoplasmic reticulum to the Golgi apparatus occurs via 50-70 nm transition vesicles which derive from part-rough, part-smooth transitional elements of the endoplasmic reticulum (tER). Vesicle budding from the tER is an ATP-dependent process. The ternary complex containing UFD1, VCP and NPLOC4 binds ubiquitinated proteins and is necessary for the export of misfolded proteins from the ER to the cytoplasm, where they are degraded by the proteasome. The NPLOC4-UFD1-VCP complex regulates spindle disassembly at the end of mitosis and is necessary for the formation of a closed nuclear envelope. Regulates E3 ubiquitin-protein ligase activity of RNF19A. Component of the VCP/p97-AMFR/gp78 complex that participates in the final step of the sterol-mediated ubiquitination and endoplasmic reticulum-associated degradation (ERAD) of HMGCR. Mediates the endoplasmic reticulum-associated degradation of CHRNA3 in cortical neurons as part of the STUB1-VCP-UBXN2A complex. Involved in endoplasmic reticulum stress-induced pre-emptive quality control, a mechanism that selectively attenuates the translocation of newly synthesized proteins into the endoplasmic reticulum and reroutes them to the cytosol for proteasomal degradation. Involved in clearance process by mediating G3BP1 extraction from stress granules. Also involved in DNA damage response: recruited to double-strand breaks (DSBs) sites in a RNF8- and RNF168-dependent manner and promotes the recruitment of TP53BP1 at DNA damage sites. Recruited to stalled replication forks by SPRTN: may act by mediating extraction of DNA polymerase eta (POLH) to prevent excessive translesion DNA synthesis and limit the incidence of mutations induced by DNA damage. Together with SPRTN metalloprotease, involved in the repair of covalent DNA-protein cross-links (DPCs) during DNA synthesis. Involved in interstrand cross-link repair in response to replication stress by mediating unloading of the ubiquitinated CMG helicase complex. Mediates extraction of PARP1 trapped to chromatin: recognizes and binds ubiquitinated PARP1 and promotes its removal. Required for cytoplasmic retrotranslocation of stressed/damaged mitochondrial outer-membrane proteins and their subsequent proteasomal degradation. Essential for the maturation of ubiquitin-containing autophagosomes and the clearance of ubiquitinated protein by autophagy. Acts as a negative regulator of type I interferon production by interacting with RIGI: interaction takes place when RIGI is ubiquitinated via 'Lys-63'-linked ubiquitin on its CARD domains, leading to recruit RNF125 and promote ubiquitination and degradation of RIGI. May play a role in the ubiquitin-dependent sorting of membrane proteins to lysosomes where they undergo degradation. May more particularly play a role in caveolins sorting in cells. By controlling the steady-state expression of the IGF1R receptor, indirectly regulates the insulin-like growth factor receptor signaling pathway. The polypeptide is Transitional endoplasmic reticulum ATPase (VCP) (Bos taurus (Bovine)).